The primary structure comprises 534 residues: Serine protease vicPa (534 aa).

The first 17 residues, 1–17 (MLCYLLIHILCLQAVLG), serve as a signal peptide directing secretion. 2 N-linked (GlcNAc...) asparagine glycosylation sites follow: Asn65 and Asn126. Residue Ser174 is the Charge relay system of the active site. Asn297, Asn416, and Asn436 each carry an N-linked (GlcNAc...) asparagine glycan. Asp450 functions as the Charge relay system in the catalytic mechanism.

It belongs to the peptidase S28 family.

It functions in the pathway mycotoxin biosynthesis. Functionally, serine protease, part of the gene cluster that mediates the biosynthesis of the secondary metabolite victorin, the molecular basis for Victoria blight of oats. Within the pathway, vicPa and vicPb are probably involved in the processing of the vicA1 and vicA2 precursors. The pathway starts with the processing of the precursor vicA1 by several endopeptidases including kexin proteases as well as the cluster-specific S28 family peptidases vicPa and vicPb to produce 7 identical copies of the hexapeptide Gly-Leu-Lys-Leu-Ala-Phe. After being excised from the precursor peptide, the core peptides are cyclized and modified post-translationally by enzymes encoded within the gene cluster. The ustYa family oxidase vicYb is required for the formation of the macrocycle in victorin and the copper amine oxidases (CAOs) vicK1 and vicK2 are responsible for converting victorin to the active form by oxidizing the N-terminal glycyl residue in the peptides to glyoxylate. Relaxed substrate specificity of enzymes in the victorin biosynthetic pathway results in a metabolic grid that produces a set of analogs including victorinines B, C, E or HV-toxin M. This Bipolaris victoriae (strain FI3) (Victoria blight of oats agent) protein is Serine protease vicPa.